The sequence spans 89 residues: Large ribosomal subunit protein bL27 (89 aa).

Positions 1 to 22 (MAHKKAGGSSRNGRDSESKRLG) are disordered.

The protein belongs to the bacterial ribosomal protein bL27 family.

This Rhizobium etli (strain CIAT 652) protein is Large ribosomal subunit protein bL27.